We begin with the raw amino-acid sequence, 1608 residues long: Adenylate cyclase type 10 (1608 aa).

Guanylate cyclase domains lie at 42 to 179 (VLMF…RLAQ) and 293 to 418 (TIVF…ARMM). 2 residues coordinate Mg(2+): D47 and I48. 47–52 (DISGFT) contacts ATP. K95 is a hydrogencarbonate binding site. D99 serves as a coordination point for Mg(2+). ATP contacts are provided by D99 and K144. Hydrogencarbonate contacts are provided by V167, R176, and M337. Residues V406 and 412-416 (NIAAR) each bind ATP.

This sequence belongs to the adenylyl cyclase class-4/guanylyl cyclase family. The cofactor is Mg(2+). It depends on Mn(2+) as a cofactor. Post-translationally, cleavage may occur to generate the active 48 kDa form. Detected in testis (at protein level). Preferentially expressed in testis.

The protein resides in the cell membrane. It is found in the cytoplasm. Its subcellular location is the cytoskeleton. The protein localises to the perinuclear region. It localises to the nucleus. The protein resides in the cell projection. It is found in the cilium. Its subcellular location is the mitochondrion. The enzyme catalyses ATP = 3',5'-cyclic AMP + diphosphate. With respect to regulation, activated by manganese or magnesium ions. In the presence of magnesium ions, the enzyme is activated by bicarbonate. Calcium mildly increases the enzyme activity, also in the presence of magnesium ions. Catalyzes the formation of the signaling molecule cAMP. May function as sensor that mediates responses to changes in cellular bicarbonate and CO(2) levels. Has a critical role in mammalian spermatogenesis by producing the cAMP which regulates cAMP-responsive nuclear factors indispensable for sperm maturation in the epididymis. Induces capacitation, the maturational process that sperm undergo prior to fertilization. Involved in ciliary beat regulation. The sequence is that of Adenylate cyclase type 10 (Adcy10) from Rattus norvegicus (Rat).